The following is a 737-amino-acid chain: ATP-dependent RNA helicase SUV3, mitochondrial (737 aa).

Residues 1–25 constitute a mitochondrion transit peptide; that stretch reads MTLVKYSTIAFPLRSFRLFIFVKKA. Positions 226–365 constitute a Helicase ATP-binding domain; that stretch reads EARKIRRHII…KSVLPLVKSI (140 aa). 239-246 lines the ATP pocket; it reads GPTNSGKT. Positions 390–546 constitute a Helicase C-terminal domain; sequence PVKDGIKGLR…YLKTAVTWPT (157 aa).

It belongs to the helicase family.

The protein localises to the mitochondrion. The enzyme catalyses ATP + H2O = ADP + phosphate + H(+). Functionally, probable ATP-dependent RNA helicase involved in a variety of mitochondrial post-transcriptional processes and in translation. It is a key control element in nuclear-mitochondrial interactions. This Saccharomyces paradoxus (Yeast) protein is ATP-dependent RNA helicase SUV3, mitochondrial (SUV3).